Reading from the N-terminus, the 187-residue chain is Photosystem I assembly protein Ycf4 (187 aa).

Transmembrane regions (helical) follow at residues Leu-21–Ser-43 and Leu-69–Gly-91.

The protein belongs to the Ycf4 family.

It localises to the plastid. Its subcellular location is the cyanelle thylakoid membrane. Functionally, seems to be required for the assembly of the photosystem I complex. The protein is Photosystem I assembly protein Ycf4 of Cyanophora paradoxa.